We begin with the raw amino-acid sequence, 2248 residues long: MDEFELFQQLNQTAPLVKTEEPEVPDEFQQANNNQSAPLRTGLSDLSHEIAAAKQREEEEAQRLADFMQKDMKEPAVKRKRGSEEYKKDPLESKAPLSTFGHSSRPRRSVNYASIERGDEAQAQSLVTDFGSRGNRKKPKRTRDELDENYMEENEGNSGRKKKPNAKGASRQFQVPGLPTYASQYSRPPKQEDVFKTIVPLAEDARAEGERVIGFRLDSQPAVRRASGGFRRFCAWLSDNQIFSIMQTVDKLCIVGANNEDHDEILLKSIRHVYNAMPPTFRRDWEYAARKDVFDSRLFVQNMPMPLSEISVTDPRHPPSPIARGTTVRPNCCENQPLFLNMCETIEHYLGHHDVVHLFGCDICYRVYPSRYELTKHDCKEFAEYLRQLTFKQQTLHLEAAYMYLCCSQCGLWLSVKPSGEGKKGWTYFATALMNHSCQPLVPVVAYFPKPLKDEGKGIRIQFQVMSELNIGLPLSCSECNIEEFHSVVEIEEHFKEKHEANHTCIKCGKTFGTEFMLKHHAQSHTTQTAQFANYLQMSATYQPPPSSGRLPYVGFGSSIPAIGGLTSGEVQALEASENKKSEFVEPDEYTIRKKLLRWKHAKTKKENRNITDSNEKEFSYEPGESSGEEDFQKSLLEQDNQSSSSSDSDSDSDDFTSSKQKKKRNIKIRGDLGYEHINRNKFFERPESEKEARKRIEKVYKKHVLLSRERLLDPEEALRILEESRMVHLNSIQSTLADDIAMSCIRTISLPASNCIDPLKDLLLVNKIFYFCTKCNYIFSKDPVVHCLSCEVTEDDLIEVYHAASGPHAGVRCIDPECKAHLCSVISLKTHLSDVHSKQATLELVSGELDNFSENRFDRSLMLMAKHFTQLQFDERTYLARFTDIECFMPFSGLLEAKDQPRPMPIRQQPQQIKPAYSLVRPDIIAPNELMRPYTLTPAIRPGQRIKPYKVPRTSRWYSCSWCDREYESLNQFVDHLTRFHTHPCPSCGKAFSSQNTRRTHVCSRLFAEIKGRGATLCGQCPSCPEIHQVERIFVHMLNRHFSTIEYVLATGELLPPARDVGIRYNHGENGGYGRSYESLRAIEQSVVDPRSPDYRLKQVKISALPIHGVELNRLPARDPPMGSFTVCPPKDKNIDPRLMCYMCELTFDSYDELTHHMDDHPEKWANCPFCAANTPTHFDLQKHLIQEHVVQISGQACCAFCQEHHRFMSSHILFRCKRVSRCTICGVKSNDPLANRVHIQRSHALTLRRFQCAYCIKVFVSVGEYYEHECASGGGRVYSCTCSPNKFFNSPIEFCDHFDSVHILRNKCQLCSYDAPSQDGMVKHRKTHMRSGCPKEQTKKLFILMKCLFPKHNSGYMRFIEGGPVPASYQDVDRSQMNYLMCNMGTVSPSCHKSYAQAPRTLLEALEGVASDSRSGGLQKVVNVTTRMNEPSSSDVIMLSDDEDDDCVVFEKAVPNGVAQGSSTSTPNPESSINCEVRVETSQAGYGGAQQPGYVDEDDTDLEVAQGGKSPYGEPVVKEVVDENGDDELAVVAEVENSTGTLPSSISAGREKKFKCQKCSLAFYTNGSLESHMRDHRQDAGAQLCTETYGIPVVTKASWLCRNCCVVFENQPKYQKHMAIHGDTCLTCIHCSGIAFNHTAIQNHMKSHEEKKVRYSCGTCLCTFASDLALFDHLSVAHGVSLYYFCKVCGFGSTSADSVFQHISIHNGHNYSLVQRFGACPAQLLNYDPTDELEFRSQILNKTIQLVSPSDCSHRSMLLQCETVVSCKTCHCTQAWFNYMAFNNHSEETGFPQFKNVDLANDYRRDFPLSRHLNERNALSMSQFGNAKHGSANHSHGQAQPNKRTFRHEVPYRTAAPRSSLQTNGSSMGSVTTNGGRVVRPSPPNSMNVTLRRAPPQQAPPRRIVIANSAPNNTNVLRNHVAVTTKCQFKDCDKVLHSEFDRQLHSMHSSNSSWFCRQCGHSPKSEIDLFLHYIQVHLKPAYDKHQSNSFKSNVFHLKCPIRSCTSPEFQSPKAFEKHMRTAHAAELPFEASCCDARFASKALCVKHDQEHASFLDSNGTDASCCPICGSLSMWSLPKDPHTDCLQSHIIRHGLDYRSSCRQCLKQFPADVNQDQVIAHILDTHGMSMHGNTFHCNLCTTGTKTVEEFAEHCRKAHVFHILVKSSHSTRGELVVTTGQEYENYVGLKSVTRASLNSISSQRASNAGETAQPSVLCAGSGNAALLTIAAAIGEPETSNNTAEVLTLD.

Residues 1–189 (MDEFELFQQL…TYASQYSRPP (189 aa)) are disordered. The span at 29 to 38 (QQANNNQSAP) shows a compositional bias: polar residues. Over residues 54–92 (KQREEEEAQRLADFMQKDMKEPAVKRKRGSEEYKKDPLE) the composition is skewed to basic and acidic residues. Over residues 145–155 (ELDENYMEENE) the composition is skewed to acidic residues. The Required for interaction with hpl-2 isoform a signature appears at 440–444 (PLVPV). The C2H2-type 1 zinc-finger motif lies at 503–525 (HTCIKCGKTFGTEFMLKHHAQSH). Residues 603-665 (KTKKENRNIT…FTSSKQKKKR (63 aa)) are disordered. Positions 605–620 (KKENRNITDSNEKEFS) are enriched in basic and acidic residues. 6 consecutive C2H2-type zinc fingers follow at residues 812 to 837 (VRCI…SDVH), 959 to 982 (YSCS…TRFH), 1140 to 1162 (LMCY…MDDH), 1556 to 1578 (FKCQ…MRDH), 1601 to 1623 (WLCR…MAIH), and 1657 to 1680 (YSCG…SVAH). The segment covering 1859 to 1877 (PRSSLQTNGSSMGSVTTNG) has biased composition (polar residues). Residues 1859–1900 (PRSSLQTNGSSMGSVTTNGGRVVRPSPPNSMNVTLRRAPPQQ) are disordered.

Interacts (via PLVPV motif) with chromobox protein homolog hpl-2 (via chromo (shadow subtype) domain); the interaction is direct and influences localization of hpl-2 to nuclear foci. In the L3 stage, expressed in syncytial hypodermal cell 7, body wall muscles, intestinal cells, distal tip cells and many neurons.

It localises to the nucleus. Functionally, involved in repression of vulval fate, possibly by a tumor suppressor protein Rb-mediated mechanism. May act in a common pathway with retinoblastoma-like protein homolog lin-35 and hpl-2 to influence the ER stress response in the intestine. Plays a role in recruiting chromobox protein homolog hpl-2 to specific chromatin sites. This is Zinc finger protein lin-13 (lin-13) from Caenorhabditis elegans.